The primary structure comprises 197 residues: HTH-type transcriptional regulator BetI (197 aa).

One can recognise an HTH tetR-type domain in the interval P8–L68. The H-T-H motif DNA-binding region spans S31–F50.

It functions in the pathway amine and polyamine biosynthesis; betaine biosynthesis via choline pathway [regulation]. Repressor involved in the biosynthesis of the osmoprotectant glycine betaine. It represses transcription of the choline transporter BetT and the genes of BetAB involved in the synthesis of glycine betaine. This is HTH-type transcriptional regulator BetI from Pseudomonas savastanoi pv. phaseolicola (strain 1448A / Race 6) (Pseudomonas syringae pv. phaseolicola (strain 1448A / Race 6)).